Here is a 638-residue protein sequence, read N- to C-terminus: Sodium- and chloride-dependent neutral and basic amino acid transporter B(0+) (638 aa).

The Cytoplasmic segment spans residues 1-44 (MDRLKCPNFFKCRQKEKVTASSENFHVGENDENQERGNWSKKSD). 3 helical membrane-spanning segments follow: residues 45-65 (YLLS…FPYL), 72-92 (GAFL…LFFL), and 110-130 (ILPL…FVAI). The Extracellular segment spans residues 131 to 230 (YYNVIIAYSL…RSSGMDETGV (100 aa)). N-linked (GlcNAc...) asparagine glycans are attached at residues N155, N163, N174, N185, N193, and N198. Helical transmembrane passes span 231-251 (VVWY…AALF) and 257-277 (SGKV…ILLI). N298 carries N-linked (GlcNAc...) asparagine glycosylation. 7 helical membrane passes run 311–331 (AATQ…ALSS), 344–364 (IIVC…IFSI), 395–415 (LAQL…LLTL), 453–473 (ILFL…VHLI), 476–496 (FCAG…IIWI), 524–544 (CWFV…LVKF), and 559–579 (VALG…MAII). Residues 580–638 (KIVQAEGNILQRIISCCRPASNWGPYLEKHRGERYRDMAEPAKETDHEIPTISGSTKPE) are Cytoplasmic-facing. Residues 618 to 628 (AEPAKETDHEI) are compositionally biased toward basic and acidic residues. The tract at residues 618 to 638 (AEPAKETDHEIPTISGSTKPE) is disordered.

It belongs to the sodium:neurotransmitter symporter (SNF) (TC 2.A.22) family. SLC6A14 subfamily. Expressed in the distal region of the intestinal tract: cecum and colon.

Its subcellular location is the membrane. It is found in the apical cell membrane. It catalyses the reaction glycine(out) + chloride(out) + 2 Na(+)(out) = glycine(in) + chloride(in) + 2 Na(+)(in). It carries out the reaction L-leucine(out) + chloride(out) + 2 Na(+)(out) = L-leucine(in) + chloride(in) + 2 Na(+)(in). The catalysed reaction is L-glutamine(out) + chloride(out) + 2 Na(+)(out) = L-glutamine(in) + chloride(in) + 2 Na(+)(in). The enzyme catalyses L-arginine(out) + chloride(out) + 2 Na(+)(out) = L-arginine(in) + chloride(in) + 2 Na(+)(in). It catalyses the reaction (R)-carnitine(out) + chloride(out) + 2 Na(+)(out) = (R)-carnitine(in) + chloride(in) + 2 Na(+)(in). It carries out the reaction O-propanoyl-(R)-carnitine(out) + chloride(out) + 2 Na(+)(out) = O-propanoyl-(R)-carnitine(in) + chloride(in) + 2 Na(+)(in). The catalysed reaction is L-isoleucine(out) + chloride(out) + 2 Na(+)(out) = L-isoleucine(in) + chloride(in) + 2 Na(+)(in). The enzyme catalyses L-methionine(out) + chloride(out) + 2 Na(+)(out) = L-methionine(in) + chloride(in) + 2 Na(+)(in). It catalyses the reaction L-valine(out) + chloride(out) + 2 Na(+)(out) = L-valine(in) + chloride(in) + 2 Na(+)(in). It carries out the reaction L-alanine(out) + chloride(out) + 2 Na(+)(out) = L-alanine(in) + chloride(in) + 2 Na(+)(in). The catalysed reaction is L-serine(out) + chloride(out) + 2 Na(+)(out) = L-serine(in) + chloride(in) + 2 Na(+)(in). The enzyme catalyses L-cysteine(out) + chloride(out) + 2 Na(+)(out) = L-cysteine(in) + chloride(in) + 2 Na(+)(in). It catalyses the reaction L-asparagine(out) + chloride(out) + 2 Na(+)(out) = L-asparagine(in) + chloride(in) + 2 Na(+)(in). It carries out the reaction L-threonine(out) + chloride(out) + 2 Na(+)(out) = L-threonine(in) + chloride(in) + 2 Na(+)(in). The catalysed reaction is L-phenylalanine(out) + chloride(out) + 2 Na(+)(out) = L-phenylalanine(in) + chloride(in) + 2 Na(+)(in). The enzyme catalyses L-tryptophan(out) + chloride(out) + 2 Na(+)(out) = L-tryptophan(in) + chloride(in) + 2 Na(+)(in). It catalyses the reaction L-tyrosine(out) + chloride(out) + 2 Na(+)(out) = L-tyrosine(in) + chloride(in) + 2 Na(+)(in). It carries out the reaction L-histidine(out) + chloride(out) + 2 Na(+)(out) = L-histidine(in) + chloride(in) + 2 Na(+)(in). The catalysed reaction is L-lysine(out) + chloride(out) + 2 Na(+)(out) = L-lysine(in) + chloride(in) + 2 Na(+)(in). The enzyme catalyses O-butanoyl-(R)-carnitine(out) + chloride(out) + 2 Na(+)(out) = O-butanoyl-(R)-carnitine(in) + chloride(in) + 2 Na(+)(in). Functionally, amino acid transporter that plays an important role in the absorption of amino acids in the intestinal tract. Mediates the uptake of a broad range of neutral and cationic amino acids (with the exception of proline) in a Na(+)/Cl(-)-dependent manner. Transports non-alpha-amino acids such as beta-alanine with low affinity, and has a higher affinity for dipolar and cationic amino acids such as leucine and lysine. Can also transport carnitine, butyrylcarnitine and propionylcarnitine coupled to the transmembrane gradients of Na(+) and Cl(-). This chain is Sodium- and chloride-dependent neutral and basic amino acid transporter B(0+), found in Mus musculus (Mouse).